A 612-amino-acid polypeptide reads, in one-letter code: Lipoma-preferred partner (612 aa).

2 disordered regions span residues 1-118 (MSHP…SSLD) and 132-219 (ECSS…SSRP). Positions 26–40 (THSFGNPSISVSTQQ) are enriched in polar residues. Residues 41–53 (PPKKFAPVVAPKP) are compositionally biased toward low complexity. Lysine 108 carries the post-translational modification N6-acetyllysine. Phosphoserine occurs at positions 116 and 151. Polar residues-rich tracts occupy residues 143 to 158 (QSSTGSTASPPVSTPV) and 171 to 181 (PLTATKKSTLK). Positions 183-193 (QPAPQAGPIPV) are enriched in pro residues. Polar residues predominate over residues 209 to 219 (SYTTASTSSRP). Tyrosine 244 and tyrosine 301 each carry phosphotyrosine. The disordered stretch occupies residues 307 to 387 (YGGRNDSDPT…LGPSSVAPSF (81 aa)). Polar residues predominate over residues 314–323 (DPTYGQQGHP). Lysine 327 is covalently cross-linked (Glycyl lysine isopeptide (Lys-Gly) (interchain with G-Cter in SUMO1)). Threonine 333 is modified (phosphothreonine). Serine 375 carries the post-translational modification Phosphoserine. LIM zinc-binding domains are found at residues 414 to 473 (GRCA…INTL), 474 to 534 (EQCN…KFAP), and 535 to 603 (RCSV…RIRV).

The protein belongs to the zyxin/ajuba family. Interacts with VASP, with PDZ domains of SCRIB and with ACTN1/alpha-actinin. Expressed in a wide variety of tissues but no or very low expression in brain and peripheral leukocytes.

Its subcellular location is the nucleus. It is found in the cytoplasm. It localises to the cell junction. The protein localises to the cell membrane. Its function is as follows. May play a structural role at sites of cell adhesion in maintaining cell shape and motility. In addition to these structural functions, it may also be implicated in signaling events and activation of gene transcription. May be involved in signal transduction from cell adhesion sites to the nucleus allowing successful integration of signals arising from soluble factors and cell-cell adhesion sites. Also suggested to serve as a scaffold protein upon which distinct protein complexes are assembled in the cytoplasm and in the nucleus. The protein is Lipoma-preferred partner (LPP) of Homo sapiens (Human).